The sequence spans 95 residues: Aspartyl/glutamyl-tRNA(Asn/Gln) amidotransferase subunit C (95 aa).

It belongs to the GatC family. Heterotrimer of A, B and C subunits.

It carries out the reaction L-glutamyl-tRNA(Gln) + L-glutamine + ATP + H2O = L-glutaminyl-tRNA(Gln) + L-glutamate + ADP + phosphate + H(+). It catalyses the reaction L-aspartyl-tRNA(Asn) + L-glutamine + ATP + H2O = L-asparaginyl-tRNA(Asn) + L-glutamate + ADP + phosphate + 2 H(+). In terms of biological role, allows the formation of correctly charged Asn-tRNA(Asn) or Gln-tRNA(Gln) through the transamidation of misacylated Asp-tRNA(Asn) or Glu-tRNA(Gln) in organisms which lack either or both of asparaginyl-tRNA or glutaminyl-tRNA synthetases. The reaction takes place in the presence of glutamine and ATP through an activated phospho-Asp-tRNA(Asn) or phospho-Glu-tRNA(Gln). In Xanthobacter autotrophicus (strain ATCC BAA-1158 / Py2), this protein is Aspartyl/glutamyl-tRNA(Asn/Gln) amidotransferase subunit C.